Consider the following 465-residue polypeptide: UDP-N-acetylmuramoylalanine--D-glutamate ligase (465 aa).

127–133 (GSNGKST) serves as a coordination point for ATP.

This sequence belongs to the MurCDEF family.

The protein localises to the cytoplasm. It carries out the reaction UDP-N-acetyl-alpha-D-muramoyl-L-alanine + D-glutamate + ATP = UDP-N-acetyl-alpha-D-muramoyl-L-alanyl-D-glutamate + ADP + phosphate + H(+). It participates in cell wall biogenesis; peptidoglycan biosynthesis. Cell wall formation. Catalyzes the addition of glutamate to the nucleotide precursor UDP-N-acetylmuramoyl-L-alanine (UMA). This is UDP-N-acetylmuramoylalanine--D-glutamate ligase from Cereibacter sphaeroides (strain ATCC 17029 / ATH 2.4.9) (Rhodobacter sphaeroides).